The primary structure comprises 78 residues: Small ribosomal subunit protein bS18A (78 aa).

The protein belongs to the bacterial ribosomal protein bS18 family. In terms of assembly, part of the 30S ribosomal subunit. Forms a tight heterodimer with protein bS6.

Functionally, binds as a heterodimer with protein bS6 to the central domain of the 16S rRNA, where it helps stabilize the platform of the 30S subunit. This Streptomyces avermitilis (strain ATCC 31267 / DSM 46492 / JCM 5070 / NBRC 14893 / NCIMB 12804 / NRRL 8165 / MA-4680) protein is Small ribosomal subunit protein bS18A.